We begin with the raw amino-acid sequence, 345 residues long: Phosphoribosylformylglycinamidine cyclo-ligase (345 aa).

This sequence belongs to the AIR synthase family.

It is found in the cytoplasm. The enzyme catalyses 2-formamido-N(1)-(5-O-phospho-beta-D-ribosyl)acetamidine + ATP = 5-amino-1-(5-phospho-beta-D-ribosyl)imidazole + ADP + phosphate + H(+). The protein operates within purine metabolism; IMP biosynthesis via de novo pathway; 5-amino-1-(5-phospho-D-ribosyl)imidazole from N(2)-formyl-N(1)-(5-phospho-D-ribosyl)glycinamide: step 2/2. The polypeptide is Phosphoribosylformylglycinamidine cyclo-ligase (Shewanella baltica (strain OS185)).